A 331-amino-acid chain; its full sequence is Biotin synthase (331 aa).

The region spanning 52–277 (PEVEVEGIVS…RTILRYAGGR (226 aa)) is the Radical SAM core domain. [4Fe-4S] cluster contacts are provided by Cys67, Cys71, and Cys74. The [2Fe-2S] cluster site is built by Cys110, Cys202, and Arg272.

Belongs to the radical SAM superfamily. Biotin synthase family. Homodimer. It depends on [4Fe-4S] cluster as a cofactor. [2Fe-2S] cluster serves as cofactor.

It catalyses the reaction (4R,5S)-dethiobiotin + (sulfur carrier)-SH + 2 reduced [2Fe-2S]-[ferredoxin] + 2 S-adenosyl-L-methionine = (sulfur carrier)-H + biotin + 2 5'-deoxyadenosine + 2 L-methionine + 2 oxidized [2Fe-2S]-[ferredoxin]. It participates in cofactor biosynthesis; biotin biosynthesis; biotin from 7,8-diaminononanoate: step 2/2. Catalyzes the conversion of dethiobiotin (DTB) to biotin by the insertion of a sulfur atom into dethiobiotin via a radical-based mechanism. The protein is Biotin synthase of Salinispora tropica (strain ATCC BAA-916 / DSM 44818 / JCM 13857 / NBRC 105044 / CNB-440).